Reading from the N-terminus, the 440-residue chain is Chromosome partition protein MukF (440 aa).

The leucine-zipper stretch occupies residues L208–I236.

This sequence belongs to the MukF family. In terms of assembly, interacts, and probably forms a ternary complex, with MukE and MukB via its C-terminal region. The complex formation is stimulated by calcium or magnesium. It is required for an interaction between MukE and MukB.

Its subcellular location is the cytoplasm. It is found in the nucleoid. In terms of biological role, involved in chromosome condensation, segregation and cell cycle progression. May participate in facilitating chromosome segregation by condensation DNA from both sides of a centrally located replisome during cell division. Not required for mini-F plasmid partitioning. Probably acts via its interaction with MukB and MukE. Overexpression results in anucleate cells. It has a calcium binding activity. The chain is Chromosome partition protein MukF from Escherichia coli (strain ATCC 8739 / DSM 1576 / NBRC 3972 / NCIMB 8545 / WDCM 00012 / Crooks).